The chain runs to 361 residues: MKQTPLNARHRALGARMVEFGGWDMPVQYAGIIAEHKATREGAGLFDISHMARFWVTGPDSERFIQLIDTFDISKTAIGQSDYGIMCYEDGGIVDDIFTYHLGPDEWMVVANAGNAEKDWAWLNQHTAGYDVVLTDRSQELAMIALQGPKAESLLAPLTDADVVNLAFHGITKATVEGAAGYISRTGYTGEDGFELFLPAGEIERIWDRLLEVGATPIGLGARDSLRFEPGLALYGHEIERDINPYEAKLGWVVKLDKGPFIGSEALHDIKANGPVRTLVGLEMTGRGIARQGYPVVALDGSELGVVTTGMPSPSLGKNLAYALVKAGSLKIGAEVDVLIREKPVRATVVKTPFYKARYKK.

It belongs to the GcvT family. In terms of assembly, the glycine cleavage system is composed of four proteins: P, T, L and H.

The enzyme catalyses N(6)-[(R)-S(8)-aminomethyldihydrolipoyl]-L-lysyl-[protein] + (6S)-5,6,7,8-tetrahydrofolate = N(6)-[(R)-dihydrolipoyl]-L-lysyl-[protein] + (6R)-5,10-methylene-5,6,7,8-tetrahydrofolate + NH4(+). Functionally, the glycine cleavage system catalyzes the degradation of glycine. The sequence is that of Aminomethyltransferase from Herpetosiphon aurantiacus (strain ATCC 23779 / DSM 785 / 114-95).